Reading from the N-terminus, the 385-residue chain is Succinate--CoA ligase [ADP-forming] subunit beta (385 aa).

Residues 9–244 enclose the ATP-grasp domain; the sequence is KALFRTFGVP…LDEEDPLEVE (236 aa). ATP-binding positions include lysine 46, 53–55, glutamate 99, glutamine 102, and glutamate 107; that span reads GRG. Mg(2+)-binding residues include asparagine 199 and aspartate 213. Residues asparagine 264 and 321 to 323 contribute to the substrate site; that span reads GIL.

The protein belongs to the succinate/malate CoA ligase beta subunit family. As to quaternary structure, heterotetramer of two alpha and two beta subunits. It depends on Mg(2+) as a cofactor.

It carries out the reaction succinate + ATP + CoA = succinyl-CoA + ADP + phosphate. The enzyme catalyses GTP + succinate + CoA = succinyl-CoA + GDP + phosphate. The protein operates within carbohydrate metabolism; tricarboxylic acid cycle; succinate from succinyl-CoA (ligase route): step 1/1. Functionally, succinyl-CoA synthetase functions in the citric acid cycle (TCA), coupling the hydrolysis of succinyl-CoA to the synthesis of either ATP or GTP and thus represents the only step of substrate-level phosphorylation in the TCA. The beta subunit provides nucleotide specificity of the enzyme and binds the substrate succinate, while the binding sites for coenzyme A and phosphate are found in the alpha subunit. The chain is Succinate--CoA ligase [ADP-forming] subunit beta from Desulforapulum autotrophicum (strain ATCC 43914 / DSM 3382 / VKM B-1955 / HRM2) (Desulfobacterium autotrophicum).